Here is a 360-residue protein sequence, read N- to C-terminus: Peptide chain release factor 1 (360 aa).

Gln-237 carries the post-translational modification N5-methylglutamine.

Belongs to the prokaryotic/mitochondrial release factor family. Methylated by PrmC. Methylation increases the termination efficiency of RF1.

Its subcellular location is the cytoplasm. Its function is as follows. Peptide chain release factor 1 directs the termination of translation in response to the peptide chain termination codons UAG and UAA. This chain is Peptide chain release factor 1, found in Pseudomonas savastanoi pv. phaseolicola (strain 1448A / Race 6) (Pseudomonas syringae pv. phaseolicola (strain 1448A / Race 6)).